A 3640-amino-acid polypeptide reads, in one-letter code: Serine/threonine-protein kinase SMG1 (3640 aa).

Over residues 21–34 the composition is skewed to polar residues; that stretch reads NDWQPRSDSLSASQ. Residues 21–41 are disordered; that stretch reads NDWQPRSDSLSASQDGVKCSV. The 349-residue stretch at 1495-1843 folds into the FAT domain; the sequence is YCHSGKCELA…LYPAIVGSIS (349 aa). An HEAT repeat occupies 1794-1829; sequence APWRGIIPQLFSRLNHPEAYIRQSICSLLCRVAQDS. The interval 1870-1890 is disordered; the sequence is GLCGGESETGSGPTSQESSRG. A compositionally biased stretch (low complexity) spans 1874–1887; sequence GESETGSGPTSQES. Residues 2102 to 2441 form the PI3K/PI4K catalytic domain; that stretch reads VGNTITILPT…MERDITRSLF (340 aa). The segment at 2108–2114 is G-loop; sequence ILPTKTK. Positions 2310-2318 are catalytic loop; that stretch reads GLGDRHLDN. The tract at residues 2330-2354 is activation loop; sequence HIDYNVCFEKGKSLRVPEKVPFRMT. Residues 3608 to 3640 enclose the FATC domain; the sequence is RRMSVTEQVDYVIKEATNVDNLAQLYEGWTAWV.

This sequence belongs to the PI3/PI4-kinase family. The cofactor is Mn(2+). Post-translationally, autophosphorylated.

The protein localises to the nucleus. Its subcellular location is the cytoplasm. It catalyses the reaction L-seryl-[protein] + ATP = O-phospho-L-seryl-[protein] + ADP + H(+). The catalysed reaction is L-threonyl-[protein] + ATP = O-phospho-L-threonyl-[protein] + ADP + H(+). Its function is as follows. Serine/threonine protein kinase involved in both mRNA surveillance and genotoxic stress response pathways. Recognizes the substrate consensus sequence [ST]-Q. Plays a central role in nonsense-mediated decay (NMD) of mRNAs containing premature stop codons by phosphorylating UPF1/RENT1. The protein is Serine/threonine-protein kinase SMG1 of Danio rerio (Zebrafish).